The sequence spans 285 residues: Shikimate dehydrogenase (NADP(+)) (285 aa).

Shikimate contacts are provided by residues 20–22 (SLS) and Thr67. Lys71 serves as the catalytic Proton acceptor. Residue Glu83 coordinates NADP(+). Positions 92 and 107 each coordinate shikimate. NADP(+) contacts are provided by residues 132–136 (GAGGA) and Leu230. Tyr232 contacts shikimate. NADP(+) is bound at residue Gly253.

The protein belongs to the shikimate dehydrogenase family. Homodimer.

The enzyme catalyses shikimate + NADP(+) = 3-dehydroshikimate + NADPH + H(+). The protein operates within metabolic intermediate biosynthesis; chorismate biosynthesis; chorismate from D-erythrose 4-phosphate and phosphoenolpyruvate: step 4/7. In terms of biological role, involved in the biosynthesis of the chorismate, which leads to the biosynthesis of aromatic amino acids. Catalyzes the reversible NADPH linked reduction of 3-dehydroshikimate (DHSA) to yield shikimate (SA). The polypeptide is Shikimate dehydrogenase (NADP(+)) (Salinibacter ruber (strain DSM 13855 / M31)).